The primary structure comprises 289 residues: DDRGK domain-containing protein 1 (289 aa).

The Lumenal segment spans residues 1 to 2; that stretch reads MD. Residues 3–23 traverse the membrane as a helical segment; the sequence is PFILAAIISGIVIIILSIAFL. Residues 24–289 are Cytoplasmic-facing; it reads RVSQVKPQAA…LINLAPVTVP (266 aa). The tract at residues 65 to 168 is disordered; that stretch reads RHQAALEEEP…DERKKREQEE (104 aa). The span at 70–85 shows a compositional bias: acidic residues; it reads LEEEPEIQEEADEGAP. Basic and acidic residues predominate over residues 87 to 166; the sequence is IDQKIDFDDK…AEDERKKREQ (80 aa).

The protein belongs to the DDRGK1 family. Interacts with Atg9; the interaction is transient.

It localises to the endoplasmic reticulum membrane. Its function is as follows. Substrate adapter for ufmylation, the covalent attachment of the ubiquitin-like modifier UFM1 to substrate proteins. Required for ufmylation of Atg9; protects the nervous system during aging, possibly by stabilizing Atg9 and supporting its function. The sequence is that of DDRGK domain-containing protein 1 from Bombyx mori (Silk moth).